A 644-amino-acid polypeptide reads, in one-letter code: Biosynthetic arginine decarboxylase (644 aa).

The residue at position 113 (K113) is an N6-(pyridoxal phosphate)lysine. A substrate-binding site is contributed by 293 to 303; it reads FDVGGGLGVDY.

The protein belongs to the Orn/Lys/Arg decarboxylase class-II family. SpeA subfamily. Requires Mg(2+) as cofactor. The cofactor is pyridoxal 5'-phosphate.

The enzyme catalyses L-arginine + H(+) = agmatine + CO2. Its function is as follows. Catalyzes the biosynthesis of agmatine from arginine. The sequence is that of Biosynthetic arginine decarboxylase from Pasteurella multocida (strain Pm70).